Consider the following 173-residue polypeptide: MFDFLTSLQTYRQEAAQAAQYIGQGFGVTFDHMSRRPITIHYPYEKLIPSERFRGRIHFEFDKCIACEVCVRVCPINLPVVDWDYQKSVKKKQLRSYSIDFGVCIFCGNCVEYCPTNCLSMTEEYELSVYDRHELNFDHVALGRVPTSVVQDTLVTPVLGLGYLPKGELSSLP.

4Fe-4S ferredoxin-type domains lie at 55–84 (GRIH…VDWD) and 95–124 (RSYS…MTEE). Residues Cys64, Cys67, Cys70, Cys74, Cys104, Cys107, Cys110, and Cys114 each contribute to the [4Fe-4S] cluster site.

This sequence belongs to the complex I 23 kDa subunit family. NDH is composed of at least 16 different subunits, 5 of which are encoded in the nucleus. [4Fe-4S] cluster is required as a cofactor.

The protein resides in the plastid. The protein localises to the chloroplast thylakoid membrane. It catalyses the reaction a plastoquinone + NADH + (n+1) H(+)(in) = a plastoquinol + NAD(+) + n H(+)(out). The catalysed reaction is a plastoquinone + NADPH + (n+1) H(+)(in) = a plastoquinol + NADP(+) + n H(+)(out). NDH shuttles electrons from NAD(P)H:plastoquinone, via FMN and iron-sulfur (Fe-S) centers, to quinones in the photosynthetic chain and possibly in a chloroplast respiratory chain. The immediate electron acceptor for the enzyme in this species is believed to be plastoquinone. Couples the redox reaction to proton translocation, and thus conserves the redox energy in a proton gradient. In Nephroselmis olivacea (Green alga), this protein is NAD(P)H-quinone oxidoreductase subunit I, chloroplastic.